The following is a 286-amino-acid chain: MAENTMWHETLHDQFGQYFAVDNVLYHEKTDHQDLIIFENAAFGRVMALDGVVQTTERDEFIYHEMMTHVPLLAHGHAKHVLIIGGGDGAMLREVTRHKNVETITMVEIDAGVVSFCRQYLPNHNAGSYDDPRFTLVIDDGVNFVNQTHQTFDVIISDCTDPIGPGESLFTSAFYEGCKRCLNPGGIFVAQNGVCFLQQDEAIDSHRKLSHYFSDVGFYQAAIPTYYGGIMTFAWATDNDALRHLSSEIIQARFHAAGLKCRYYNPAIHAAAFALPQYLHDALSAQ.

The region spanning 5–238 (TMWHETLHDQ…GIMTFAWATD (234 aa)) is the PABS domain. Glutamine 33 contributes to the S-methyl-5'-thioadenosine binding site. Positions 64 and 88 each coordinate spermidine. S-methyl-5'-thioadenosine-binding positions include glutamate 108 and 140 to 141 (DG). Aspartate 158 functions as the Proton acceptor in the catalytic mechanism. Residue 158–161 (DCTD) coordinates spermidine. Position 165 (proline 165) interacts with S-methyl-5'-thioadenosine.

It belongs to the spermidine/spermine synthase family. Homodimer or homotetramer.

The protein localises to the cytoplasm. It carries out the reaction S-adenosyl 3-(methylsulfanyl)propylamine + putrescine = S-methyl-5'-thioadenosine + spermidine + H(+). The protein operates within amine and polyamine biosynthesis; spermidine biosynthesis; spermidine from putrescine: step 1/1. Catalyzes the irreversible transfer of a propylamine group from the amino donor S-adenosylmethioninamine (decarboxy-AdoMet) to putrescine (1,4-diaminobutane) to yield spermidine. The chain is Polyamine aminopropyltransferase from Salmonella paratyphi A (strain ATCC 9150 / SARB42).